The chain runs to 148 residues: Large ribosomal subunit protein uL15 (148 aa).

The disordered stretch occupies residues Met-1–Leu-57. A compositionally biased stretch (basic residues) spans Lys-10–Gly-20. Over residues Ile-23 to Met-35 the composition is skewed to gly residues.

It belongs to the universal ribosomal protein uL15 family. In terms of assembly, part of the 50S ribosomal subunit.

Its function is as follows. Binds to the 23S rRNA. The chain is Large ribosomal subunit protein uL15 from Trichormus variabilis (strain ATCC 29413 / PCC 7937) (Anabaena variabilis).